The chain runs to 500 residues: Sodium/potassium/calcium exchanger 5 (500 aa).

An N-terminal signal peptide occupies residues 1–29; that stretch reads MQTKGGQTWARRALLLGILWATAHLPLSG. Topologically, residues 30 to 66 are extracellular; it reads TSLPQRLPRATGNSTQCVISPSSEFPEGFFTRQERRD. A helical transmembrane segment spans residues 67-87; that stretch reads GGIIIYFLIIVYMFMAISIVC. Residues 88 to 111 lie on the Cytoplasmic side of the membrane; the sequence is DEYFLPSLEIISESLGLSQDVAGT. Residues 112–132 traverse the membrane as a helical segment; the sequence is TFMAAGSSAPELVTAFLGVFI. The Extracellular portion of the chain corresponds to 133-136; sequence TKGD. Residues 137–157 form a helical membrane-spanning segment; sequence IGISTILGSAIYNLLGICAAC. Residues 158 to 169 are Cytoplasmic-facing; the sequence is GLLSNTVSTLSC. Residues 170–190 traverse the membrane as a helical segment; sequence WPLFRDCAAYTISAAAVLGII. At 191–195 the chain is on the extracellular side; sequence YDNQV. A helical membrane pass occupies residues 196–216; it reads YWYEGALLLLIYGLYVLVLCF. Over 217-302 the chain is Cytoplasmic; that stretch reads DIKINQYIIK…PSVFNMPEAD (86 aa). A helical membrane pass occupies residues 303 to 323; that stretch reads LKRIFWVLSLPIITLLFLTTP. Residues 324–333 lie on the Extracellular side of the membrane; sequence DCRKKFWKNY. A helical membrane pass occupies residues 334 to 354; the sequence is FVITFFMSAIWISAFTYILVW. Residues 355-368 lie on the Cytoplasmic side of the membrane; the sequence is MVTITGETLEIPDT. Residues 369–389 traverse the membrane as a helical segment; it reads VMGLTLLAAGTSIPDTIASVL. Residues 390-399 lie on the Extracellular side of the membrane; the sequence is VARKGKGDMA. The chain crosses the membrane as a helical span at residues 400-420; the sequence is MSNIVGSNVFDMLCLGIPWFI. The Cytoplasmic segment spans residues 421 to 437; sequence KTAFINGSAPAEVNSRG. Residues 438 to 458 traverse the membrane as a helical segment; it reads LTYITISLNISIIFLFLAVHF. The Extracellular segment spans residues 459-468; sequence NGWKLDRKLG. Residues 469–489 form a helical membrane-spanning segment; the sequence is IVCLLSYLGLATLSVLYELGI. At 490–500 the chain is on the cytoplasmic side; the sequence is IGNNKIRGCGG.

The protein belongs to the Ca(2+):cation antiporter (CaCA) (TC 2.A.19) family. SLC24A subfamily.

It localises to the golgi apparatus. It is found in the trans-Golgi network membrane. Its subcellular location is the melanosome. It carries out the reaction Ca(2+)(out) + K(+)(out) + 4 Na(+)(in) = Ca(2+)(in) + K(+)(in) + 4 Na(+)(out). Calcium, potassium:sodium antiporter that transports 1 Ca(2+) and 1 K(+) to the melanosome in exchange for 4 cytoplasmic Na(+). Involved in pigmentation, possibly by participating in ion transport in melanosomes. Predominant sodium-calcium exchanger in melanocytes. This chain is Sodium/potassium/calcium exchanger 5, found in Homo sapiens (Human).